A 518-amino-acid chain; its full sequence is Cytochrome P450 1A1 (518 aa).

The tract at residues Ser-33–Leu-44 is mitochondrial targeting signal. O-linked (GlcNAc) serine glycosylation occurs at Ser-71. Phe-228 lines the substrate pocket. Cys-461 lines the heme pocket.

This sequence belongs to the cytochrome P450 family. Interacts with cytosolic chaperones HSP70 and HSP90; this interaction is required for initial targeting to mitochondria. Interacts (via mitochondrial targeting signal) with TOMM40 (via N-terminus); this interaction is required for translocation across the mitochondrial outer membrane. Heme is required as a cofactor.

Its subcellular location is the endoplasmic reticulum membrane. The protein resides in the mitochondrion inner membrane. It localises to the microsome membrane. It is found in the cytoplasm. It carries out the reaction an organic molecule + reduced [NADPH--hemoprotein reductase] + O2 = an alcohol + oxidized [NADPH--hemoprotein reductase] + H2O + H(+). The enzyme catalyses estrone + reduced [NADPH--hemoprotein reductase] + O2 = 2-hydroxyestrone + oxidized [NADPH--hemoprotein reductase] + H2O + H(+). It catalyses the reaction estrone + reduced [NADPH--hemoprotein reductase] + O2 = 4-hydroxyestrone + oxidized [NADPH--hemoprotein reductase] + H2O + H(+). The catalysed reaction is estrone + reduced [NADPH--hemoprotein reductase] + O2 = 6alpha-hydroxyestrone + oxidized [NADPH--hemoprotein reductase] + H2O + H(+). It carries out the reaction estrone + reduced [NADPH--hemoprotein reductase] + O2 = 15alpha-hydroxyestrone + oxidized [NADPH--hemoprotein reductase] + H2O + H(+). The enzyme catalyses estrone + reduced [NADPH--hemoprotein reductase] + O2 = 16alpha-hydroxyestrone + oxidized [NADPH--hemoprotein reductase] + H2O + H(+). It catalyses the reaction 17beta-estradiol + reduced [NADPH--hemoprotein reductase] + O2 = 2-hydroxy-17beta-estradiol + oxidized [NADPH--hemoprotein reductase] + H2O + H(+). The catalysed reaction is 17beta-estradiol + reduced [NADPH--hemoprotein reductase] + O2 = 4-hydroxy-17beta-estradiol + oxidized [NADPH--hemoprotein reductase] + H2O + H(+). It carries out the reaction 17beta-estradiol + reduced [NADPH--hemoprotein reductase] + O2 = 6alpha-hydroxy-17beta-estradiol + oxidized [NADPH--hemoprotein reductase] + H2O + H(+). The enzyme catalyses 17beta-estradiol + reduced [NADPH--hemoprotein reductase] + O2 = 7alpha-hydroxy-17beta-estradiol + oxidized [NADPH--hemoprotein reductase] + H2O + H(+). It catalyses the reaction 17beta-estradiol + reduced [NADPH--hemoprotein reductase] + O2 = 15alpha-hydroxy-17beta-estradiol + oxidized [NADPH--hemoprotein reductase] + H2O + H(+). The catalysed reaction is (5Z,8Z,11Z)-eicosatrienoate + reduced [NADPH--hemoprotein reductase] + O2 = 19-hydroxy-(5Z,8Z,11Z)-eicosatrienoate + oxidized [NADPH--hemoprotein reductase] + H2O + H(+). It carries out the reaction (5Z,8Z,11Z,14Z)-eicosatetraenoate + reduced [NADPH--hemoprotein reductase] + O2 = 16-hydroxy-(5Z,8Z,11Z,14Z)-eicosatetraenoate + oxidized [NADPH--hemoprotein reductase] + H2O + H(+). The enzyme catalyses (5Z,8Z,11Z,14Z)-eicosatetraenoate + reduced [NADPH--hemoprotein reductase] + O2 = 17-hydroxy-(5Z,8Z,11Z,14Z)-eicosatetraenoate + oxidized [NADPH--hemoprotein reductase] + H2O + H(+). It catalyses the reaction (5Z,8Z,11Z,14Z)-eicosatetraenoate + reduced [NADPH--hemoprotein reductase] + O2 = 18-hydroxy-(5Z,8Z,11Z,14Z)-eicosatetraenoate + oxidized [NADPH--hemoprotein reductase] + H2O + H(+). The catalysed reaction is (5Z,8Z,11Z,14Z)-eicosatetraenoate + reduced [NADPH--hemoprotein reductase] + O2 = 19-hydroxy-(5Z,8Z,11Z,14Z)-eicosatetraenoate + oxidized [NADPH--hemoprotein reductase] + H2O + H(+). It carries out the reaction (5Z,8Z,11Z,14Z,17Z)-eicosapentaenoate + reduced [NADPH--hemoprotein reductase] + O2 = 19-hydroxy-(5Z,8Z,11Z,14Z,17Z)-eicosapentaenoate + oxidized [NADPH--hemoprotein reductase] + H2O + H(+). The enzyme catalyses (5Z,8Z,11Z,14Z)-eicosatetraenoate + reduced [NADPH--hemoprotein reductase] + O2 = (8R,9S)-epoxy-(5Z,11Z,14Z)-eicosatrienoate + oxidized [NADPH--hemoprotein reductase] + H2O + H(+). It catalyses the reaction (5Z,8Z,11Z,14Z)-eicosatetraenoate + reduced [NADPH--hemoprotein reductase] + O2 = (11R,12S)-epoxy-(5Z,8Z,14Z)-eicosatrienoate + oxidized [NADPH--hemoprotein reductase] + H2O + H(+). The catalysed reaction is (5Z,8Z,11Z,14Z)-eicosatetraenoate + reduced [NADPH--hemoprotein reductase] + O2 = (14S,15R)-epoxy-(5Z,8Z,11Z)-eicosatrienoate + oxidized [NADPH--hemoprotein reductase] + H2O + H(+). It carries out the reaction (5Z,8Z,11Z,14Z)-eicosatetraenoate + reduced [NADPH--hemoprotein reductase] + O2 = (14R,15S)-epoxy-(5Z,8Z,11Z)-eicosatrienoate + oxidized [NADPH--hemoprotein reductase] + H2O + H(+). The enzyme catalyses (5Z,8Z,11Z,14Z,17Z)-eicosapentaenoate + reduced [NADPH--hemoprotein reductase] + O2 = (17R,18S)-epoxy-(5Z,8Z,11Z,14Z)-eicosatetraenoate + oxidized [NADPH--hemoprotein reductase] + H2O + H(+). It catalyses the reaction (4Z,7Z,10Z,13Z,16Z,19Z)-docosahexaenoate + reduced [NADPH--hemoprotein reductase] + O2 = (19S,20R)-epoxy-(4Z,7Z,10Z,13Z,16Z)-docosapentaenoate + oxidized [NADPH--hemoprotein reductase] + H2O + H(+). The catalysed reaction is (4Z,7Z,10Z,13Z,16Z,19Z)-docosahexaenoate + reduced [NADPH--hemoprotein reductase] + O2 = (19R,20S)-epoxy-(4Z,7Z,10Z,13Z,16Z)-docosapentaenoate + oxidized [NADPH--hemoprotein reductase] + H2O + H(+). It carries out the reaction all-trans-retinol + reduced [NADPH--hemoprotein reductase] + O2 = all-trans-retinal + oxidized [NADPH--hemoprotein reductase] + 2 H2O + H(+). The enzyme catalyses all-trans-retinal + reduced [NADPH--hemoprotein reductase] + O2 = all-trans-retinoate + oxidized [NADPH--hemoprotein reductase] + H2O + 2 H(+). It catalyses the reaction (13S)-hydroperoxy-(9Z,11E)-octadecadienoate = 13-oxo-(9Z,11E)-octadecadienoate + H2O. The catalysed reaction is (12S)-hydroperoxy-(5Z,8Z,10E,14Z)-eicosatetraenoate = 12-oxo-(5Z,8Z,10E,14Z)-eicosatetraenoate + H2O. It carries out the reaction (15S)-hydroperoxy-(5Z,8Z,11Z,13E)-eicosatetraenoate = 15-oxo-(5Z,8Z,11Z,13E)-eicosatetraenoate + H2O. The enzyme catalyses (5S)-hydroperoxy-(6E,8Z,11Z,14Z)-eicosatetraenoate = 5-oxo-(6E,8Z,11Z,14Z)-eicosatetraenoate + H2O. Its pathway is steroid hormone biosynthesis. It participates in lipid metabolism; fatty acid metabolism. The protein operates within cofactor metabolism; retinol metabolism. Functionally, a cytochrome P450 monooxygenase involved in the metabolism of various endogenous substrates, including fatty acids, steroid hormones and vitamins. Mechanistically, uses molecular oxygen inserting one oxygen atom into a substrate, and reducing the second into a water molecule, with two electrons provided by NADPH via cytochrome P450 reductase (CPR; NADPH-ferrihemoprotein reductase). Catalyzes the hydroxylation of carbon-hydrogen bonds. Exhibits high catalytic activity for the formation of hydroxyestrogens from estrone (E1) and 17beta-estradiol (E2), namely 2-hydroxy E1 and E2, as well as D-ring hydroxylated E1 and E2 at the C15alpha and C16alpha positions. Displays different regioselectivities for polyunsaturated fatty acids (PUFA) hydroxylation. Catalyzes the epoxidation of double bonds of certain PUFA. Converts arachidonic acid toward epoxyeicosatrienoic acid (EET) regioisomers, 8,9-, 11,12-, and 14,15-EET, that function as lipid mediators in the vascular system. Displays an absolute stereoselectivity in the epoxidation of eicosapentaenoic acid (EPA) producing the 17(R),18(S) enantiomer. May play an important role in all-trans retinoic acid biosynthesis in extrahepatic tissues. Catalyzes two successive oxidative transformation of all-trans retinol to all-trans retinal and then to the active form all-trans retinoic acid. May also participate in eicosanoids metabolism by converting hydroperoxide species into oxo metabolites (lipoxygenase-like reaction, NADPH-independent). The protein is Cytochrome P450 1A1 (CYP1A1) of Oryctolagus cuniculus (Rabbit).